Reading from the N-terminus, the 155-residue chain is Chaperone protein IpgC (155 aa).

It belongs to the LcrH/SycD chaperone family.

Its subcellular location is the cytoplasm. Its function is as follows. Assists the correct folding of nascent IpaB. Once it is bound to IpaB, it binds to IpaC and impedes their premature association that would lead to their degradation in the absence of IpcG. This is Chaperone protein IpgC (ipgC) from Shigella dysenteriae.